The following is a 233-amino-acid chain: MMPRLQQHKIILRQLGLQPYAPVSQAMHNFTEFRTDTTPDEIWLVEHQHVFTQGQAGKAEHVLMPGDIPVIQSDRGGQITYHGPGQQVMYVMVDLKRAKIGVRQLVTAIENTVIETLAHFNIDSHARPDAPGVYVEQQKICSLGLRIRRGCSFHGLALNIAMDLEPFQRINPCGYAGMQMTQVSALQPGVTVADVQPVLVREFTRQLGYPTAKLQPWSLSDYLLSSHSSSSVL.

Residues 36 to 211 enclose the BPL/LPL catalytic domain; that stretch reads DTTPDEIWLV…EFTRQLGYPT (176 aa). Residues 75–82, 142–144, and 155–157 each bind substrate; these read RGGQITYH, SLG, and GLA. Catalysis depends on Cys-173, which acts as the Acyl-thioester intermediate.

This sequence belongs to the LipB family.

The protein localises to the cytoplasm. The enzyme catalyses octanoyl-[ACP] + L-lysyl-[protein] = N(6)-octanoyl-L-lysyl-[protein] + holo-[ACP] + H(+). Its pathway is protein modification; protein lipoylation via endogenous pathway; protein N(6)-(lipoyl)lysine from octanoyl-[acyl-carrier-protein]: step 1/2. Its function is as follows. Catalyzes the transfer of endogenously produced octanoic acid from octanoyl-acyl-carrier-protein onto the lipoyl domains of lipoate-dependent enzymes. Lipoyl-ACP can also act as a substrate although octanoyl-ACP is likely to be the physiological substrate. The chain is Octanoyltransferase from Yersinia pseudotuberculosis serotype O:1b (strain IP 31758).